Reading from the N-terminus, the 269-residue chain is 2-keto-4-pentenoate hydratase (269 aa).

The protein belongs to the hydratase/decarboxylase family. MhpD subfamily. The cofactor is a divalent metal cation.

It carries out the reaction (S)-4-hydroxy-2-oxopentanoate = (2Z)-2-hydroxypenta-2,4-dienoate + H2O. It functions in the pathway aromatic compound metabolism; 3-phenylpropanoate degradation. Functionally, catalyzes the conversion of 2-hydroxypentadienoic acid (enolic form of 2-oxopent-4-enoate) to 4-hydroxy-2-ketopentanoic acid. In Paraburkholderia xenovorans (strain LB400), this protein is 2-keto-4-pentenoate hydratase.